Consider the following 139-residue polypeptide: Orientotoxin-2 (139 aa).

As to expression, expressed by the venom gland.

It is found in the secreted. It carries out the reaction a 1,2-diacyl-sn-glycero-3-phosphocholine + H2O = a 1-acyl-sn-glycero-3-phosphocholine + a fatty acid + H(+). Has a highly toxic phospholipase A2 activity. This chain is Orientotoxin-2, found in Vespa orientalis (Oriental hornet).